The sequence spans 705 residues: MATANFGKIQIGIYVEIKRSDGRIHQAMVTSLNEDNESVTVEWIENGDTKGKEIDLESIFSLNPDLVPDEDIEPSPEIPPPSSSSKVNKIVKNRRTVASIKNDPPPRDNRVVGSARARPSQLPEQSSSAQQNGSVSDISPVQAAKKEFGPPSRRKSNCVKEVEKLQEKREKRRLQQQELREKRAQDVDATNPNYEIMCMIRDFRGSLDYRPLTTADPIDEHRICVCVRKRPLNKKETQMKDLDVITIPSKDVVMVHEPKQKVDLTRYLENQTFRFDYAFDDSAPNEMVYRFTARPLVETIFERGMATCFAYGQTGSGKTHTMGGDCSGKNQDCSKGIYALAARDVFLMLKKPNYKKLELQVYATFFEIYSGKVFDLLNRKTKLRVLEDGKQQVQVVGLQEREVKCVEDVLKLIDIGNSCRTSGQTSANAHSSRSHAVFQIILRRKGKLHGKFSLIDLAGNERGADTSSADRQTRLEGAEINKSLLALKECIRALGRNKPHTPFRASKLTQVLRDSFIGENSRTCMIATISPGMASCENTLNTLRYANRVKELTVDPTAAGDVRPIMHHPPSQIDDLETQWGVGSSPQRDDLKLLCEQNEEEVSPQLFTFHEAVSQMVEMEEQVVEDHRAVFQESIRWIEDEKALLEMTEEVDYDVDSYATQLEAILEQKIDILTELRDKVKSFRAALQEEEQASKQINPKRPRAL.

A disordered region spans residues 65 to 185 (DLVPDEDIEP…QQELREKRAQ (121 aa)). Position 75 is a phosphoserine (Ser75). Thr96 carries the post-translational modification Phosphothreonine. Residue Ser99 is modified to Phosphoserine. Lys101 carries the post-translational modification N6-acetyllysine. Polar residues predominate over residues 122 to 139 (LPEQSSSAQQNGSVSDIS). Phosphoserine is present on residues Ser134 and Ser139. The stretch at 153 to 186 (RRKSNCVKEVEKLQEKREKRRLQQQELREKRAQD) forms a coiled coil. The span at 158 to 185 (CVKEVEKLQEKREKRRLQQQELREKRAQ) shows a compositional bias: basic and acidic residues. A Kinesin motor domain is found at 222–552 (RICVCVRKRP…LRYANRVKEL (331 aa)). 312–319 (GQTGSGKT) provides a ligand contact to ATP. Position 572 is a phosphoserine (Gln572). Residues 659-698 (ATQLEAILEQKIDILTELRDKVKSFRAALQEEEQASKQIN) are a coiled coil.

This sequence belongs to the TRAFAC class myosin-kinesin ATPase superfamily. Kinesin family. MCAK/KIF2 subfamily. Interacts with AURKA and PLK1. Interacts with PSRC1. Interacts with MCRS1; the interaction enhances recruitment of KIF2A to the minus ends of spindle microtubules which promotes chromosome alignment.

It localises to the cytoplasm. The protein resides in the cytoskeleton. The protein localises to the microtubule organizing center. It is found in the centrosome. Its subcellular location is the spindle pole. It localises to the spindle. Its function is as follows. Plus end-directed microtubule-dependent motor required for normal brain development. May regulate microtubule dynamics during axonal growth. Required for normal progression through mitosis. Required for normal congress of chromosomes at the metaphase plate. Required for normal spindle dynamics during mitosis. Promotes spindle turnover. Implicated in formation of bipolar mitotic spindles. Has microtubule depolymerization activity. The protein is Kinesin-like protein KIF2A of Rattus norvegicus (Rat).